Reading from the N-terminus, the 81-residue chain is Teretoxin Tsu6.8 (81 aa).

The signal sequence occupies residues 1 to 21 (MATSGRLLCLCLVLGLIFESL). Positions 22 to 45 (GHPVMGEKRAGENASPSARSLPKR) are excised as a propeptide.

Belongs to the teretoxin M (TM) superfamily. Post-translationally, contains 3 disulfide bonds. In terms of tissue distribution, expressed by the venom duct.

The protein localises to the secreted. This chain is Teretoxin Tsu6.8, found in Terebra subulata (Chocolate spotted auger).